The primary structure comprises 736 residues: 1,4-alpha-glucan branching enzyme GlgB (736 aa).

The Nucleophile role is filled by Asp417. The Proton donor role is filled by Glu470.

It belongs to the glycosyl hydrolase 13 family. GlgB subfamily. As to quaternary structure, monomer.

It catalyses the reaction Transfers a segment of a (1-&gt;4)-alpha-D-glucan chain to a primary hydroxy group in a similar glucan chain.. It participates in glycan biosynthesis; glycogen biosynthesis. Functionally, catalyzes the formation of the alpha-1,6-glucosidic linkages in glycogen by scission of a 1,4-alpha-linked oligosaccharide from growing alpha-1,4-glucan chains and the subsequent attachment of the oligosaccharide to the alpha-1,6 position. This chain is 1,4-alpha-glucan branching enzyme GlgB, found in Pseudomonas putida (strain ATCC 47054 / DSM 6125 / CFBP 8728 / NCIMB 11950 / KT2440).